Here is a 170-residue protein sequence, read N- to C-terminus: uncharacterized protein (170 aa).

Residues 1–26 form the signal peptide; that stretch reads MLKKKWMVGLLAGCLAAGGFSYNAFA.

This is an uncharacterized protein from Bacillus subtilis (strain 168).